Consider the following 72-residue polypeptide: Heat shock factor-binding protein 1-like protein 1 (72 aa).

A coiled-coil region spans residues 12–62 (DLLQNAAENLLLEVEEHFQALTTTLNLRMEEMGSRIEDLQRNVDDLMTQAG).

Belongs to the HSBP1 family.

The chain is Heat shock factor-binding protein 1-like protein 1 (Hsbp1l1) from Mus musculus (Mouse).